Here is a 300-residue protein sequence, read N- to C-terminus: 2-oxoglutarate-dependent dioxygenase DAO (300 aa).

The region spanning 149 to 252 (WPCQFRMNRY…VSIAMFLLAP (104 aa)) is the Fe2OG dioxygenase domain. Residues histidine 173, aspartate 175, and histidine 232 each coordinate Fe cation. Residue arginine 242 coordinates 2-oxoglutarate.

It belongs to the iron/ascorbate-dependent oxidoreductase family. Requires Fe(2+) as cofactor.

2-oxoglutarate-dependent dioxygenase essential for auxin catabolism and maintenance of auxin homeostasis in reproductive organs. Catalyzes the irreversible oxidation of indole-3-acetic acid (IAA) to the biologically inactive 2-oxoindole-3-acetic acid (OxIAA). The chain is 2-oxoglutarate-dependent dioxygenase DAO (DAO) from Oryza sativa subsp. indica (Rice).